Consider the following 98-residue polypeptide: NADH-ubiquinone oxidoreductase chain 4L (98 aa).

3 helical membrane-spanning segments follow: residues 1-21, 29-49, and 61-81; these read MSLT…GLLM, SLLC…ITIL, and IILL…LVMV.

The protein belongs to the complex I subunit 4L family. In terms of assembly, core subunit of respiratory chain NADH dehydrogenase (Complex I) which is composed of 45 different subunits.

It is found in the mitochondrion inner membrane. The enzyme catalyses a ubiquinone + NADH + 5 H(+)(in) = a ubiquinol + NAD(+) + 4 H(+)(out). Core subunit of the mitochondrial membrane respiratory chain NADH dehydrogenase (Complex I) which catalyzes electron transfer from NADH through the respiratory chain, using ubiquinone as an electron acceptor. Part of the enzyme membrane arm which is embedded in the lipid bilayer and involved in proton translocation. This chain is NADH-ubiquinone oxidoreductase chain 4L (MT-ND4L), found in Artibeus jamaicensis (Jamaican fruit-eating bat).